The following is a 445-amino-acid chain: Transcriptional enhancer factor TEF-4 (445 aa).

Disordered stretches follow at residues 1-47 (MGDP…VWSP) and 191-217 (PPASDLPGYEPPPALSPLPPPAPSPPA). The span at 25–37 (EGTGGSEGVGGDG) shows a compositional bias: gly residues. The TEA DNA-binding region spans 38–114 (SPDAEGVWSP…QVLARRKSRE (77 aa)). The interval 172-445 (WNVPDVKPFS…QYHIYRLVRD (274 aa)) is transcriptional activation. A compositionally biased stretch (pro residues) spans 199–216 (YEPPPALSPLPPPAPSPP).

As to quaternary structure, interacts with YAP1 and WWTR1/TAZ. Highest expression in brain. High levels also found in lung, testis and ovarian follicle cells. Lower levels in heart and spleen.

The protein resides in the nucleus. Functionally, transcription factor which plays a key role in the Hippo signaling pathway, a pathway involved in organ size control and tumor suppression by restricting proliferation and promoting apoptosis. The core of this pathway is composed of a kinase cascade wherein MST1/MST2, in complex with its regulatory protein SAV1, phosphorylates and activates LATS1/2 in complex with its regulatory protein MOB1, which in turn phosphorylates and inactivates YAP1 oncoprotein and WWTR1/TAZ. Acts by mediating gene expression of YAP1 and WWTR1/TAZ, thereby regulating cell proliferation, migration and epithelial mesenchymal transition (EMT) induction. Binds to the SPH and GT-IIC 'enhansons' (5'-GTGGAATGT-3'). May be involved in the gene regulation of neural development. Binds to the M-CAT motif. The protein is Transcriptional enhancer factor TEF-4 (Tead2) of Mus musculus (Mouse).